Reading from the N-terminus, the 172-residue chain is Peptidyl-prolyl cis-trans isomerase (172 aa).

A PPIase cyclophilin-type domain is found at 7–170 (FFDMSVGGQP…KKVVVEDCGQ (164 aa)).

This sequence belongs to the cyclophilin-type PPIase family. In terms of processing, not glycosylated. As to expression, expressed in pollen.

It localises to the cytoplasm. It catalyses the reaction [protein]-peptidylproline (omega=180) = [protein]-peptidylproline (omega=0). Binds cyclosporin A (CsA). CsA mediates some of its effects via an inhibitory action on PPIase. PPIases accelerate the folding of proteins. It catalyzes the cis-trans isomerization of proline imidic peptide bonds in oligopeptides. The sequence is that of Peptidyl-prolyl cis-trans isomerase (PCKR1) from Catharanthus roseus (Madagascar periwinkle).